A 571-amino-acid polypeptide reads, in one-letter code: Potassium-transporting ATPase potassium-binding subunit (571 aa).

12 consecutive transmembrane segments (helical) span residues 5–25 (GWMQIALYGAVVLALVRPLGG), 64–84 (LAYAGAMVLFNVAGFVLLYAL), 136–156 (GLTHQNFVSAASGMAVAVALI), 179–199 (LYVLLPLCTVLALFYVSQGMP), 220–240 (VGPVASQVAIKMLGTNGGGFF), 254–274 (LSNFLQMLSIFVIGAALTNVF), 285–305 (WAILTAMGLLFLAGVTVTYWA), 330–350 (FGIAASALFAVITTAASCGAV), 375–395 (IIGGVGAGLYGMLVFVVVAIF), 421–441 (MLGILCLPLMMLGFTAFATVV), 488–508 (LAIGMLVGRFFVKIPVLAIAG), and 527–547 (GGLFVGLLVGVVLIIGGLTFF).

This sequence belongs to the KdpA family. The system is composed of three essential subunits: KdpA, KdpB and KdpC.

It localises to the cell inner membrane. Part of the high-affinity ATP-driven potassium transport (or Kdp) system, which catalyzes the hydrolysis of ATP coupled with the electrogenic transport of potassium into the cytoplasm. This subunit binds the periplasmic potassium ions and delivers the ions to the membrane domain of KdpB through an intramembrane tunnel. This chain is Potassium-transporting ATPase potassium-binding subunit, found in Methylorubrum extorquens (strain PA1) (Methylobacterium extorquens).